Reading from the N-terminus, the 128-residue chain is Large ribosomal subunit protein bL19 (128 aa).

This sequence belongs to the bacterial ribosomal protein bL19 family.

This protein is located at the 30S-50S ribosomal subunit interface and may play a role in the structure and function of the aminoacyl-tRNA binding site. The chain is Large ribosomal subunit protein bL19 from Paraburkholderia xenovorans (strain LB400).